We begin with the raw amino-acid sequence, 430 residues long: DD-carboxypeptidase/endopeptidase Mpg (430 aa).

Zn(2+) contacts are provided by H295, D299, and H375.

Belongs to the peptidase M23B family. As to quaternary structure, monomer. The cofactor is Zn(2+). In terms of processing, likely to be synthesized as a proenzyme. The cleavage of the N-terminal domain is probably required for the activation of the enzyme.

The protein resides in the cell outer membrane. Its activity is regulated as follows. Peptidoglycan (PG) degradation activity is completely inhibited by zinc chelating EDTA and phenanthroline. Has both endopeptidase and DD-carboxypeptidase activities. Degrades cell wall peptidoglycan (PG) to allow consummate expression of pili. Degrades N.gonorrhoeae and E.coli PG side chains in vitro. Required for proper piliation, which in turn is required for normal colony morphology, resistance to H(2)O(2) damage and defense against killing by human polymorphonuclear leukocytes (PMNs). Involved in type IV pilus biogenesis. Involved in resistance against non-oxidative killing by adherent CXCL8/IL8-primed human PMNs. Protects from killing by PMN-produced antimicrobial factors, which kill by a mechanism completely independent of reactive oxygen species (ROS) production of the PMNs. Provides protection against oxidative damage caused by peroxides H(2)O(2) and cumene hydroperoxide in vitro. The polypeptide is DD-carboxypeptidase/endopeptidase Mpg (Neisseria gonorrhoeae (strain ATCC 700825 / FA 1090)).